The primary structure comprises 231 residues: Ferredoxin-type protein NapG (231 aa).

A signal peptide (tat-type signal) is located at residues 1-41; that stretch reads MSRSAKPQNGRRRFLRDVVRTAGGLAAVGVALGLQQQTARA. 4 4Fe-4S ferredoxin-type domains span residues 50–81, 89–121, 130–166, and 177–208; these read GAIN…LATL, TPYF…REIE, LAVL…LELE, and FLPT…VLPL. [4Fe-4S] cluster contacts are provided by Cys-61, Cys-64, Cys-67, Cys-71, Cys-99, Cys-102, Cys-107, Cys-111, Cys-139, Cys-147, Cys-150, Cys-154, Cys-186, Cys-189, Cys-192, and Cys-196.

It depends on [4Fe-4S] cluster as a cofactor. Post-translationally, exported by the Tat system. The position of the signal peptide cleavage has not been experimentally proven.

Its subcellular location is the periplasm. In terms of biological role, required for electron transfer from ubiquinol, via NapC, to the periplasmic nitrate reductase NapAB complex. This chain is Ferredoxin-type protein NapG (napG), found in Escherichia coli (strain K12).